A 242-amino-acid polypeptide reads, in one-letter code: Phosphoribosylaminoimidazole-succinocarboxamide synthase (242 aa).

This sequence belongs to the SAICAR synthetase family.

It carries out the reaction 5-amino-1-(5-phospho-D-ribosyl)imidazole-4-carboxylate + L-aspartate + ATP = (2S)-2-[5-amino-1-(5-phospho-beta-D-ribosyl)imidazole-4-carboxamido]succinate + ADP + phosphate + 2 H(+). The protein operates within purine metabolism; IMP biosynthesis via de novo pathway; 5-amino-1-(5-phospho-D-ribosyl)imidazole-4-carboxamide from 5-amino-1-(5-phospho-D-ribosyl)imidazole-4-carboxylate: step 1/2. The polypeptide is Phosphoribosylaminoimidazole-succinocarboxamide synthase (Trichodesmium erythraeum (strain IMS101)).